The following is a 339-amino-acid chain: Dehydrogenase/reductase SDR family member 7 (339 aa).

The N-terminal stretch at 1-28 (MNWELLLWLLVLCALLLLLVQLLRFLRA) is a signal peptide. Residues Ser60 and Ile62 each coordinate NAD(+). Position 190 (Ser190) interacts with substrate. NAD(+) contacts are provided by Tyr203, Lys207, and Ser239. Catalysis depends on Tyr203, which acts as the Proton acceptor.

This sequence belongs to the short-chain dehydrogenases/reductases (SDR) family. As to expression, found predominantly in the adrenal glands, liver, thyroid, prostate, small intestine, colon, stomach, kidney and brain. Lower levels observed in skeletal muscle, the lung and the spleen.

It localises to the endoplasmic reticulum membrane. The enzyme catalyses all-trans-retinol + NADP(+) = all-trans-retinal + NADPH + H(+). It catalyses the reaction 5alpha-androstane-3alpha,17beta-diol + NADP(+) = 17beta-hydroxy-5alpha-androstan-3-one + NADPH + H(+). Functionally, NADPH-dependent oxidoreductase which catalyzes the reduction of a variety of compounds bearing carbonyl groups including steroids, retinoids and xenobiotics. Catalyzes the reduction/inactivation of 5alpha-dihydrotestosterone to 3alpha-androstanediol, with a possible role in the modulation of androgen receptor function. Involved in the reduction of all-trans-retinal to all-trans-retinol. Converts cortisone to 20beta-dihydrocortisone in vitro, although the physiological relevance of this activity is questionable. Reduces exogenous compounds such as quinones (1,2-naphtoquinone, 9,10-phenantrenequinone and benzoquinone) and other xenobiotics (alpha-diketones) in vitro, suggesting a role in the biotransformation of xenobiotics with carbonyl group. A dehydrogenase activity has not been detected so far. May play a role as tumor suppressor. This Homo sapiens (Human) protein is Dehydrogenase/reductase SDR family member 7.